The chain runs to 301 residues: MAIFNHLPSSVLQCLAIFLSIIIEALPFILLGAILSGFIEVYLTPDIVQKYLPKNKIGRILFGTFVGFIFPSCECGIVPIVNRFLEKKVPSYTAIPFLATAPIINPIVLFATFSAFGNSWRFVFLRLFGAIIVAISLGILLGFIVDEHIIKESAKPCHFHDYSHKKAYQKIFYALAHAVDELFDTGRYLIFGSFVAASMQIYVPTRILTSIGHNPLTAILIMMLLAFILSLCSEADAFIGTSLLATFGVAPVVAFLLIGPMVDIKNLMMMKNAFKTKFILQFVGTSSLIIIIYCLIVGVMQ.

A run of 8 helical transmembrane segments spans residues 15-35 (LAIF…GAIL), 60-80 (ILFG…IVPI), 97-117 (FLAT…SAFG), 124-144 (FLRL…LGFI), 188-208 (YLIF…TRIL), 211-231 (IGHN…ILSL), 238-258 (FIGT…FLLI), and 278-298 (FILQ…LIVG).

The protein belongs to the UPF0718 family. Interacts with SMU_746c.

Its subcellular location is the cell membrane. Functionally, could be part of a two-component membrane permease system responsible for amino acid transport under low pH. Involved in acidogenesis, biofilm formation and low-pH survival. In Streptococcus mutans serotype c (strain ATCC 700610 / UA159), this protein is Putative two-component membrane permease complex subunit SMU_747c.